The sequence spans 677 residues: DNA ligase (677 aa).

Residues 35–39, 84–85, and E116 contribute to the NAD(+) site; these read DAEYD and SL. Catalysis depends on K118, which acts as the N6-AMP-lysine intermediate. The NAD(+) site is built by R139, E176, K295, and K319. Residues C413, C416, C431, and C437 each contribute to the Zn(2+) site. Positions 596–677 constitute a BRCT domain; the sequence is LDELPLAGQV…MLAMFADLEG (82 aa).

It belongs to the NAD-dependent DNA ligase family. LigA subfamily. It depends on Mg(2+) as a cofactor. The cofactor is Mn(2+).

It catalyses the reaction NAD(+) + (deoxyribonucleotide)n-3'-hydroxyl + 5'-phospho-(deoxyribonucleotide)m = (deoxyribonucleotide)n+m + AMP + beta-nicotinamide D-nucleotide.. In terms of biological role, DNA ligase that catalyzes the formation of phosphodiester linkages between 5'-phosphoryl and 3'-hydroxyl groups in double-stranded DNA using NAD as a coenzyme and as the energy source for the reaction. It is essential for DNA replication and repair of damaged DNA. The chain is DNA ligase from Pseudoalteromonas atlantica (strain T6c / ATCC BAA-1087).